A 483-amino-acid chain; its full sequence is Altronate oxidoreductase (483 aa).

An NAD(+)-binding site is contributed by I18 to A29.

The protein belongs to the mannitol dehydrogenase family. UxaB subfamily.

It catalyses the reaction D-altronate + NAD(+) = keto-D-tagaturonate + NADH + H(+). It participates in carbohydrate metabolism; pentose and glucuronate interconversion. In Escherichia coli O6:K15:H31 (strain 536 / UPEC), this protein is Altronate oxidoreductase.